The following is a 202-amino-acid chain: Outer-membrane lipoprotein LolB (202 aa).

An N-terminal signal peptide occupies residues 1-18 (MFRRTYFWLMLLPLFMVG). A lipid anchor (N-palmitoyl cysteine) is attached at Cys19. Cys19 is lipidated: S-diacylglycerol cysteine.

It belongs to the LolB family. Monomer.

The protein localises to the cell outer membrane. In terms of biological role, plays a critical role in the incorporation of lipoproteins in the outer membrane after they are released by the LolA protein. The sequence is that of Outer-membrane lipoprotein LolB from Vibrio vulnificus (strain YJ016).